Consider the following 94-residue polypeptide: Co-chaperonin GroES (94 aa).

This sequence belongs to the GroES chaperonin family. As to quaternary structure, heptamer of 7 subunits arranged in a ring. Interacts with the chaperonin GroEL.

The protein localises to the cytoplasm. Functionally, together with the chaperonin GroEL, plays an essential role in assisting protein folding. The GroEL-GroES system forms a nano-cage that allows encapsulation of the non-native substrate proteins and provides a physical environment optimized to promote and accelerate protein folding. GroES binds to the apical surface of the GroEL ring, thereby capping the opening of the GroEL channel. This Streptococcus pneumoniae (strain 70585) protein is Co-chaperonin GroES.